The following is an 81-amino-acid chain: MKTLLLTLVVVTIVCLDLGYTMTCCNQQSSQPKTITTCAESSCYKKTWKDHHGTRIERGCGCPPRKPLIDLICCETDECNN.

Positions M1–T21 are cleaved as a signal peptide. 4 cysteine pairs are disulfide-bonded: C24-C43, C38-C60, C62-C73, and C74-C79.

Belongs to the three-finger toxin family. Short-chain subfamily. Type I alpha-neurotoxin sub-subfamily. Expressed by the venom gland.

The protein localises to the secreted. Binds to muscle nicotinic acetylcholine receptor (nAChR) and inhibit acetylcholine from binding to the receptor, thereby impairing neuromuscular transmission. The sequence is that of Short neurotoxin 1 from Cryptophis nigrescens (Eastern small-eyed snake).